We begin with the raw amino-acid sequence, 700 residues long: Putative proline-rich receptor-like protein kinase PERK6 (700 aa).

The disordered stretch occupies residues 1–180 (MAEGQSPENS…SGGGSNSSGN (180 aa)). Residues 1–186 (MAEGQSPENS…SSGNNEPNTA (186 aa)) lie on the Extracellular side of the membrane. Composition is skewed to pro residues over residues 9 to 19 (NSPPSPTPPSP) and 29 to 47 (SPPP…PPPD). Low complexity predominate over residues 48 to 137 (DSSNGSPQPP…GNNNDNNNQN (90 aa)). Asn176 carries an N-linked (GlcNAc...) asparagine glycan. A helical transmembrane segment spans residues 187–207 (AIVGIVAGAGLLFLVMILFCV). Topologically, residues 208 to 700 (CCCRKKKKKH…NNKTTPSRDH (493 aa)) are cytoplasmic. The disordered stretch occupies residues 249–315 (NLSQQYPGSN…GPSVPPPHPS (67 aa)). Residues 255-265 (PGSNGNNNWMN) show a composition bias toward low complexity. Residues 266-286 (SPPPPPPGSWQPSPPPPPPPV) show a composition bias toward pro residues. Thr326 is subject to Phosphothreonine. Residues 337 to 615 (FSQSRLLGQG…VRALEGDATL (279 aa)) enclose the Protein kinase domain. ATP-binding positions include 343–351 (LGQGGFGYV) and Lys365. Position 410 is a phosphotyrosine (Tyr410). Catalysis depends on Asp461, which acts as the Proton acceptor. Ser465 and Ser494 each carry phosphoserine. Phosphothreonine occurs at positions 495 and 500. Tyr508 carries the post-translational modification Phosphotyrosine. Disordered stretches follow at residues 616 to 642 (DDLS…DSST) and 659 to 700 (EYGA…SRDH). Residues 689 to 700 (ANNNKTTPSRDH) are compositionally biased toward polar residues.

The protein belongs to the protein kinase superfamily. Ser/Thr protein kinase family. Mostly expressed in flower buds.

Its subcellular location is the cell membrane. The enzyme catalyses L-seryl-[protein] + ATP = O-phospho-L-seryl-[protein] + ADP + H(+). The catalysed reaction is L-threonyl-[protein] + ATP = O-phospho-L-threonyl-[protein] + ADP + H(+). This chain is Putative proline-rich receptor-like protein kinase PERK6 (PERK6), found in Arabidopsis thaliana (Mouse-ear cress).